The sequence spans 23 residues: U22-ctenitoxin-Co1a (23 aa).

As to expression, expressed by the venom gland.

Its subcellular location is the secreted. The sequence is that of U22-ctenitoxin-Co1a from Ctenus ornatus (Brazilian spider).